The following is a 369-amino-acid chain: Glutamate 5-kinase (369 aa).

K8 contributes to the ATP binding site. Substrate is bound by residues S49, D136, and N148. ATP-binding positions include 168–169 (TD) and 212–218 (TGGMMTK). Positions 277 to 355 (TGKLYLDSGA…KEISTILGYV (79 aa)) constitute a PUA domain.

It belongs to the glutamate 5-kinase family.

The protein resides in the cytoplasm. It carries out the reaction L-glutamate + ATP = L-glutamyl 5-phosphate + ADP. It participates in amino-acid biosynthesis; L-proline biosynthesis; L-glutamate 5-semialdehyde from L-glutamate: step 1/2. Catalyzes the transfer of a phosphate group to glutamate to form L-glutamate 5-phosphate. This Trichormus variabilis (strain ATCC 29413 / PCC 7937) (Anabaena variabilis) protein is Glutamate 5-kinase.